A 726-amino-acid polypeptide reads, in one-letter code: Biotin--protein ligase (726 aa).

The segment at 28 to 98 (EVKDQVSNKQ…SDRGGGPVEH (71 aa)) is disordered. A compositionally biased stretch (basic and acidic residues) spans 43–75 (PKPEPSLEIKPEQDGMEHVGRDDPKALGEEPKQ). Phosphoserine occurs at positions 147 and 299. The 190-residue stretch at 463–652 (KQLGKVILFA…VLEKLIKEFQ (190 aa)) folds into the BPL/LPL catalytic domain.

It belongs to the biotin--protein ligase family. As to quaternary structure, monomer. In terms of tissue distribution, widely expressed. Mostly expressed in muscle, placenta and to a lower extent in the brain, kidney, pancreas, liver and lung.

It is found in the cytoplasm. The protein resides in the mitochondrion. It catalyses the reaction apo-[methylmalonyl-CoA:pyruvate carboxytransferase] + biotin + ATP = holo-[methylmalonyl-CoA:pyruvate carboxytransferase] + AMP + diphosphate + H(+). It carries out the reaction apo-[propionyl-CoA:carbon-dioxide ligase (ADP-forming)] + biotin + ATP = holo-[propionyl-CoA:carbon-dioxide ligase (ADP-forming)] + AMP + diphosphate + H(+). The enzyme catalyses apo-[3-methylcrotonoyl-CoA:carbon-dioxide ligase (ADP-forming)] + biotin + ATP = holo-[3-methylcrotonoyl-CoA:carbon-dioxide ligase (ADP-forming)] + AMP + diphosphate + H(+). The catalysed reaction is biotin + L-lysyl-[protein] + ATP = N(6)-biotinyl-L-lysyl-[protein] + AMP + diphosphate + H(+). Its function is as follows. Biotin--protein ligase catalyzing the biotinylation of the 4 biotin-dependent carboxylases acetyl-CoA-carboxylase, pyruvate carboxylase, propionyl-CoA carboxylase, and methylcrotonyl-CoA carboxylase. This is Biotin--protein ligase from Homo sapiens (Human).